We begin with the raw amino-acid sequence, 304 residues long: ATP phosphoribosyltransferase (304 aa).

This sequence belongs to the ATP phosphoribosyltransferase family. Long subfamily. It depends on Mg(2+) as a cofactor.

It is found in the cytoplasm. The enzyme catalyses 1-(5-phospho-beta-D-ribosyl)-ATP + diphosphate = 5-phospho-alpha-D-ribose 1-diphosphate + ATP. It participates in amino-acid biosynthesis; L-histidine biosynthesis; L-histidine from 5-phospho-alpha-D-ribose 1-diphosphate: step 1/9. Feedback inhibited by histidine. In terms of biological role, catalyzes the condensation of ATP and 5-phosphoribose 1-diphosphate to form N'-(5'-phosphoribosyl)-ATP (PR-ATP). Has a crucial role in the pathway because the rate of histidine biosynthesis seems to be controlled primarily by regulation of HisG enzymatic activity. The polypeptide is ATP phosphoribosyltransferase (Xylella fastidiosa (strain M12)).